Consider the following 908-residue polypeptide: Flap endonuclease GEN homolog 1 (908 aa).

The interval 2 to 96 (GVNDLWQILE…SKRTQTRYGP (95 aa)) is XPG-N domain. D30, E75, E134, E136, D155, D157, and D208 together coordinate Mg(2+). Residues 122–208 (ECLGMPWVQA…VGLAVLLGCD (87 aa)) form an XPG-I domain region. Residues 208-383 (DYLPKGVPGV…LLVLLTRYDM (176 aa)) form a 5'-3' exonuclease domain region. The chromodomain stretch occupies residues 389–463 (GRKTSNQLQP…VYQKQLSETK (75 aa)). Disordered regions lie at residues 460–482 (SETKGRKQKSMKNKPKGSHLPEA), 629–650 (YESEQGTSDSEGSGRDLQQSNP), 792–834 (RDSS…NKLR), and 853–886 (AEDEENGFSDLGRSPQSFRPCHDKDENSTASWEN). Residues 465-476 (RKQKSMKNKPKG) are compositionally biased toward basic residues. S794 and S795 each carry phosphoserine. The span at 824-834 (HVRDSTHNKLR) shows a compositional bias: basic and acidic residues.

It belongs to the XPG/RAD2 endonuclease family. GEN subfamily. Largely monomeric, dimerizes on the Holliday junction and the first nick occurs upon dimerization at the junction. It depends on Mg(2+) as a cofactor. Expressed in bone marrow and testis and to a lesser extent in thymus, spleen, brain and colon.

Its subcellular location is the nucleus. Endonuclease which resolves Holliday junctions (HJs) by the introduction of symmetrically related cuts across the junction point, to produce nicked duplex products in which the nicks can be readily ligated. Four-way DNA intermediates, also known as Holliday junctions, are formed during homologous recombination and DNA repair, and their resolution is necessary for proper chromosome segregation. Cleaves HJs by a nick and counter-nick mechanism involving dual coordinated incisions that lead to the formation of ligatable nicked duplex products. Cleavage of the first strand is rate limiting, while second strand cleavage is rapid. Largely monomeric, dimerizes on the HJ and the first nick occurs upon dimerization at the junction. Efficiently cleaves both single and double HJs contained within large recombination intermediates. Exhibits a weak sequence preference for incision between two G residues that reside in a T-rich region of DNA. Also has endonuclease activity on 5'-flap and replication fork (RF) DNA substrates. This is Flap endonuclease GEN homolog 1 (Gen1) from Mus musculus (Mouse).